The chain runs to 321 residues: MSEYLVTGGTGFIASYIIKSLLELGHTVRTTVRNPRDEEKVGFLWEFQGAKQRLKILQADLTVEGSFDEAVNGVDGVFHTASPVLVPQDHNIQETLVDPIIKGTTNVMSSCAKSKATLKRIVLTSSCSSIRYRFDATEASPLNESHWSDPEYCKRFNLWYGYAKTLGEREAWRIAEEKGLDLVVVNPSFVVGPLLGPKPTSTLLMILAIAKGLAGEYPNFTVGFVHIDDVVAAHVLAMEEPKASGRIICSSSVAHWSEIIELMRNKYPNYPFENKCSNKEGDNSPHSMDTRKIHELGFGSFKSLPEMFDDCIISFQKKGLL.

Ser-2 carries the post-translational modification N-acetylserine. NADP(+) is bound by residues 4-28 (YLVT…GHTV), Lys-40, and Tyr-160.

Belongs to the NAD(P)-dependent epimerase/dehydratase family. Dihydroflavonol-4-reductase subfamily.

The protein localises to the cytoplasm. May be involved in the biosynthesis of hydroxylated tetraketide compounds that serve as sporopollenin precursors (the main constituents of exine). Acts on tetraketide alpha-pyrones and reduces the carbonyl function on the tetraketide alkyl chain to a secondary alcohol function. In Arabidopsis thaliana (Mouse-ear cress), this protein is Tetraketide alpha-pyrone reductase 2 (TKPR2).